A 341-amino-acid chain; its full sequence is tRNA N6-adenosine threonylcarbamoyltransferase (341 aa).

Positions 114 and 118 each coordinate Fe cation. Residues 136 to 140, aspartate 170, glycine 183, aspartate 187, and asparagine 275 each bind substrate; that span reads LVSGG. Residue aspartate 303 coordinates Fe cation.

Belongs to the KAE1 / TsaD family. It depends on Fe(2+) as a cofactor.

Its subcellular location is the cytoplasm. The enzyme catalyses L-threonylcarbamoyladenylate + adenosine(37) in tRNA = N(6)-L-threonylcarbamoyladenosine(37) in tRNA + AMP + H(+). Its function is as follows. Required for the formation of a threonylcarbamoyl group on adenosine at position 37 (t(6)A37) in tRNAs that read codons beginning with adenine. Is involved in the transfer of the threonylcarbamoyl moiety of threonylcarbamoyl-AMP (TC-AMP) to the N6 group of A37, together with TsaE and TsaB. TsaD likely plays a direct catalytic role in this reaction. The sequence is that of tRNA N6-adenosine threonylcarbamoyltransferase from Mycobacterium avium (strain 104).